The sequence spans 604 residues: Elongation factor 4 (604 aa).

One can recognise a tr-type G domain in the interval 7–189 (SRLRNFCIIA…AVVDRIPPPA (183 aa)). GTP contacts are provided by residues 19-24 (DHGKST) and 136-139 (NKID).

This sequence belongs to the TRAFAC class translation factor GTPase superfamily. Classic translation factor GTPase family. LepA subfamily.

Its subcellular location is the cell inner membrane. It catalyses the reaction GTP + H2O = GDP + phosphate + H(+). Required for accurate and efficient protein synthesis under certain stress conditions. May act as a fidelity factor of the translation reaction, by catalyzing a one-codon backward translocation of tRNAs on improperly translocated ribosomes. Back-translocation proceeds from a post-translocation (POST) complex to a pre-translocation (PRE) complex, thus giving elongation factor G a second chance to translocate the tRNAs correctly. Binds to ribosomes in a GTP-dependent manner. In Prochlorococcus marinus (strain MIT 9313), this protein is Elongation factor 4.